A 391-amino-acid polypeptide reads, in one-letter code: Probable acridone synthase 3 (391 aa).

Residue Cys-164 is part of the active site.

The protein belongs to the thiolase-like superfamily. Chalcone/stilbene synthases family.

It catalyses the reaction N-methylanthraniloyl-CoA + 3 malonyl-CoA + 3 H(+) = 1,3-dihydroxy-N-methylacridone + 3 CO2 + 4 CoA + H2O. The polypeptide is Probable acridone synthase 3 (ACS3) (Ruta graveolens (Common rue)).